We begin with the raw amino-acid sequence, 331 residues long: uncharacterized protein (331 aa).

4 WD repeats span residues 53–92 (KAHT…KSAV), 97–139 (QQST…KLIR), 144–184 (AHND…DSTD), and 300–331 (ASEE…AFRV).

Its subcellular location is the cytoplasm. The protein localises to the nucleus. This is an uncharacterized protein from Schizosaccharomyces pombe (strain 972 / ATCC 24843) (Fission yeast).